Here is a 464-residue protein sequence, read N- to C-terminus: Argininosuccinate lyase (464 aa).

N-acetylalanine is present on Ala2. Position 7 is an N6-acetyllysine (Lys7). A 2-(N(omega)-L-arginino)succinate-binding site is contributed by Ser27. Lys69 is modified (N6-acetyllysine). The 2-(N(omega)-L-arginino)succinate site is built by Asn114 and Thr159. His160 (proton acceptor) is an active-site residue. Ser281 (proton donor) is an active-site residue. Lys288 carries the post-translational modification N6-acetyllysine. 2-(N(omega)-L-arginino)succinate is bound by residues Asn289, Tyr321, Gln326, and Lys329.

The protein belongs to the lyase 1 family. Argininosuccinate lyase subfamily. Homotetramer. Forms tissue-specific complexes with ASS1, SLC7A1, HSP90AA1 and nitric oxide synthase NOS1, NOS2 or NOS3; the complex maintenance is independent of ASL catalytic function. In terms of processing, acetylation modifies enzyme activity in response to alterations of extracellular nutrient availability. Acetylation increased with trichostin A (TSA) or with nicotinamide (NAM). Glucose increases acetylation by about a factor of 3 with decreasing enzyme activity. Acetylation on Lys-288 is decreased on the addition of extra amino acids resulting in activation of enzyme activity.

The catalysed reaction is 2-(N(omega)-L-arginino)succinate = fumarate + L-arginine. The protein operates within amino-acid biosynthesis; L-arginine biosynthesis; L-arginine from L-ornithine and carbamoyl phosphate: step 3/3. Its pathway is nitrogen metabolism; urea cycle; L-arginine and fumarate from (N(omega)-L-arginino)succinate: step 1/1. Enzyme activity is regulated by acetylation. Its function is as follows. Catalyzes the reversible cleavage of L-argininosuccinate to fumarate and L-arginine, an intermediate step reaction in the urea cycle mostly providing for hepatic nitrogen detoxification into excretable urea as well as de novo L-arginine synthesis in nonhepatic tissues. Essential regulator of intracellular and extracellular L-arginine pools. As part of citrulline-nitric oxide cycle, forms tissue-specific multiprotein complexes with argininosuccinate synthase ASS1, transport protein SLC7A1 and nitric oxide synthase NOS1, NOS2 or NOS3, allowing for cell-autonomous L-arginine synthesis while channeling extracellular L-arginine to nitric oxide synthesis pathway. In Macaca fascicularis (Crab-eating macaque), this protein is Argininosuccinate lyase (ASL).